The primary structure comprises 84 residues: Large ribosomal subunit protein bL27 (84 aa).

The interval 1-21 (MAHKKAGGSTRNGRDSNPKYL) is disordered.

This sequence belongs to the bacterial ribosomal protein bL27 family.

The sequence is that of Large ribosomal subunit protein bL27 from Francisella tularensis subsp. holarctica (strain FTNF002-00 / FTA).